A 62-amino-acid chain; its full sequence is Photosystem II reaction center protein Z (62 aa).

2 helical membrane passes run 8 to 28 (AVFALIVTSSVLVISVPLVFA) and 41 to 61 (FSGTSLWIGLVFLVAILNSLI).

It belongs to the PsbZ family. PSII is composed of 1 copy each of membrane proteins PsbA, PsbB, PsbC, PsbD, PsbE, PsbF, PsbH, PsbI, PsbJ, PsbK, PsbL, PsbM, PsbT, PsbY, PsbZ, Psb30/Ycf12, at least 3 peripheral proteins of the oxygen-evolving complex and a large number of cofactors. It forms dimeric complexes.

The protein localises to the plastid. Its subcellular location is the chloroplast thylakoid membrane. In terms of biological role, may control the interaction of photosystem II (PSII) cores with the light-harvesting antenna, regulates electron flow through the 2 photosystem reaction centers. PSII is a light-driven water plastoquinone oxidoreductase, using light energy to abstract electrons from H(2)O, generating a proton gradient subsequently used for ATP formation. The protein is Photosystem II reaction center protein Z of Oryza nivara (Indian wild rice).